A 111-amino-acid chain; its full sequence is MAKFTNCLALCLLLAAVVGAFGVELSEADKSAVVNEIAEKMALQEMLDGVDKLFLRKMKSSETTLTMFLKEMQLKGLPVCGETCTLGTCYTQGCTCSWPICKRNGLPDVAA.

The first 28 residues, 1-28, serve as a signal peptide directing secretion; that stretch reads MAKFTNCLALCLLLAAVVGAFGVELSEA. A propeptide spanning residues 29–75 is cleaved from the precursor; sequence DKSAVVNEIAEKMALQEMLDGVDKLFLRKMKSSETTLTMFLKEMQLK. The cyclopeptide (Gly-Asn) cross-link spans 76–104; the sequence is GLPVCGETCTLGTCYTQGCTCSWPICKRN. Intrachain disulfides connect C80/C94, C84/C96, and C89/C101. The propeptide occupies 105 to 111; the sequence is GLPDVAA.

In terms of processing, kalata-B7 is a cyclic peptide.

Probably participates in a plant defense mechanism. Has hemolytic activity. The protein is Kalata-B7 (OAK3) of Oldenlandia affinis.